The chain runs to 242 residues: Synaptonemal complex central element protein 1-like (242 aa).

The disordered stretch occupies residues 1 to 24 (MAGKLKPLNVEAPEATEEAEGQAK). Residues 44-181 (LEPQIEDLIS…LREVERRLHS (138 aa)) are a coiled coil. The disordered stretch occupies residues 206-242 (VRSAPEVGAGEGEAGPELPRARDEEDPEPPVAAPDAL).

It belongs to the SYCE family.

Functionally, may be involved in meiosis. The chain is Synaptonemal complex central element protein 1-like (SYCE1L) from Homo sapiens (Human).